The following is an 806-amino-acid chain: Ribonucleoside-diphosphate reductase large subunit-like protein (806 aa).

The protein belongs to the ribonucleoside diphosphate reductase large chain family.

The protein localises to the virion. The protein resides in the host cytoplasm. Does not possess a ribonucleotide reductase activity. Betaherpesviruses probably use another strategy to expand the dNTP pool in a quiescent host cell. This chain is Ribonucleoside-diphosphate reductase large subunit-like protein, found in Human herpesvirus 7 (strain JI) (HHV-7).